The chain runs to 489 residues: Glycogen synthase (489 aa).

Lys-18 lines the ADP-alpha-D-glucose pocket.

Belongs to the glycosyltransferase 1 family. Bacterial/plant glycogen synthase subfamily.

The enzyme catalyses [(1-&gt;4)-alpha-D-glucosyl](n) + ADP-alpha-D-glucose = [(1-&gt;4)-alpha-D-glucosyl](n+1) + ADP + H(+). It participates in glycan biosynthesis; glycogen biosynthesis. In terms of biological role, synthesizes alpha-1,4-glucan chains using ADP-glucose. In Rhodopseudomonas palustris (strain BisA53), this protein is Glycogen synthase.